Here is a 363-residue protein sequence, read N- to C-terminus: Outer membrane protein P2 (363 aa).

A signal peptide spans 1–20; it reads MKKTLAALIVGAFAASAANA.

The protein belongs to the Gram-negative porin family. In terms of assembly, homotrimer.

It is found in the cell outer membrane. Forms pores that allow passive diffusion of small molecules across the outer membrane. This Haemophilus influenzae protein is Outer membrane protein P2 (ompP2).